Reading from the N-terminus, the 450-residue chain is tRNA (guanine-N(7)-)-methyltransferase non-catalytic subunit TRM82 (450 aa).

A compositionally biased stretch (basic and acidic residues) spans 69–82; sequence AAKKLKTNEGEAIE. The segment at 69 to 103 is disordered; it reads AAKKLKTNEGEAIERPGNQRRVPLPGKDPKVPVPG. 3 WD repeats span residues 108–147, 200–241, and 245–285; these read PVYQ…KDNC, GHVS…VIDK, and GHKE…LMSS.

Belongs to the WD repeat TRM82 family. As to quaternary structure, forms a heterodimer with the catalytic subunit TRM8.

It is found in the nucleus. It functions in the pathway tRNA modification; N(7)-methylguanine-tRNA biosynthesis. Its function is as follows. Required for the formation of N(7)-methylguanine at position 46 (m7G46) in tRNA. In the complex, it is required to stabilize and induce conformational changes of the catalytic subunit. The chain is tRNA (guanine-N(7)-)-methyltransferase non-catalytic subunit TRM82 from Eremothecium gossypii (strain ATCC 10895 / CBS 109.51 / FGSC 9923 / NRRL Y-1056) (Yeast).